We begin with the raw amino-acid sequence, 161 residues long: Nucleotide-binding protein swp_1151 (161 aa).

This sequence belongs to the YajQ family.

Nucleotide-binding protein. This chain is Nucleotide-binding protein swp_1151, found in Shewanella piezotolerans (strain WP3 / JCM 13877).